The following is a 433-amino-acid chain: N-lysine methyltransferase SMYD2 (433 aa).

The region spanning 7 to 241 is the SET domain; the sequence is GGLERFCSPG…PGEEVFTSYI (235 aa). 17-19 is an S-adenosyl-L-methionine binding site; the sequence is KGR. The Zn(2+) site is built by cysteine 52, cysteine 55, cysteine 65, cysteine 68, cysteine 74, cysteine 78, histidine 86, and cysteine 90. The segment at 52–90 adopts an MYND-type zinc-finger fold; sequence CEYCFTRKEGLSKCGRCKQAFYCNVECQKEDWPMHKLEC. S-adenosyl-L-methionine-binding positions include histidine 137, 206–207, and 258–260; these read NH and YFF. Serine 283 carries the post-translational modification Phosphoserine.

The protein belongs to the class V-like SAM-binding methyltransferase superfamily. As to quaternary structure, interacts with RNA polymerase II and HELZ. Interacts with SIN3A and HDAC1. Interacts (via MYND-type zinc finger) with EPB41L3. Interacts (via SET domain) with p53/TP53. Interacts with RB1 and HSP90AA1.

The protein resides in the cytoplasm. It localises to the cytosol. Its subcellular location is the nucleus. It carries out the reaction L-lysyl(4)-[histone H3] + 3 S-adenosyl-L-methionine = N(6),N(6),N(6)-trimethyl-L-lysyl(4)-[histone H3] + 3 S-adenosyl-L-homocysteine + 3 H(+). The enzyme catalyses L-lysyl-[protein] + S-adenosyl-L-methionine = N(6)-methyl-L-lysyl-[protein] + S-adenosyl-L-homocysteine + H(+). Protein-lysine N-methyltransferase that methylates both histones and non-histone proteins, including p53/TP53 and RB1. Specifically trimethylates histone H3 'Lys-4' (H3K4me3) in vivo. The activity requires interaction with HSP90alpha. Shows even higher methyltransferase activity on p53/TP53. Monomethylates 'Lys-370' of p53/TP53, leading to decreased DNA-binding activity and subsequent transcriptional regulation activity of p53/TP53. Monomethylates RB1 at 'Lys-860'. The polypeptide is N-lysine methyltransferase SMYD2 (SMYD2) (Homo sapiens (Human)).